A 272-amino-acid polypeptide reads, in one-letter code: HMP-PP phosphatase (272 aa).

Aspartate 8 (nucleophile) is an active-site residue. 3 residues coordinate Mg(2+): aspartate 8, aspartate 10, and aspartate 212.

Belongs to the HAD-like hydrolase superfamily. Cof family. Mg(2+) serves as cofactor.

It catalyses the reaction 4-amino-2-methyl-5-(diphosphooxymethyl)pyrimidine + H2O = 4-amino-2-methyl-5-(phosphooxymethyl)pyrimidine + phosphate + H(+). Its function is as follows. Catalyzes the hydrolysis of 4-amino-2-methyl-5-hydroxymethylpyrimidine pyrophosphate (HMP-PP) to 4-amino-2-methyl-5-hydroxymethylpyrimidine phosphate (HMP-P). This is HMP-PP phosphatase from Escherichia coli (strain K12 / MC4100 / BW2952).